Reading from the N-terminus, the 503-residue chain is NAD(P)H-quinone oxidoreductase chain 4, chloroplastic (503 aa).

The next 13 helical transmembrane spans lie at 4 to 24 (FPWL…IFFL), 37 to 57 (ICIC…HFQL), 87 to 107 (IGPT…AWPV), 134 to 154 (LLLF…LLSM), 167 to 187 (FILY…GMGL), 208 to 228 (ALEI…SPII), 242 to 262 (HYST…YGLV), 272 to 292 (AHSI…IYAA), 305 to 325 (IAYS…SITD), 330 to 350 (GAIL…FLAG), 386 to 406 (LALP…GIIT), 416 to 436 (ILIT…SLSM), and 462 to 482 (LFVS…PDFV).

It belongs to the complex I subunit 4 family.

The protein resides in the plastid. Its subcellular location is the chloroplast thylakoid membrane. It carries out the reaction a plastoquinone + NADH + (n+1) H(+)(in) = a plastoquinol + NAD(+) + n H(+)(out). The enzyme catalyses a plastoquinone + NADPH + (n+1) H(+)(in) = a plastoquinol + NADP(+) + n H(+)(out). This is NAD(P)H-quinone oxidoreductase chain 4, chloroplastic from Drimys granadensis.